The following is a 746-amino-acid chain: Disintegrin and metalloproteinase domain-containing protein 18 (746 aa).

The N-terminal stretch at 1–16 (MFFLLALLTELGRLQA) is a signal peptide. Positions 17 to 183 (HVGSEGIFLH…QKKNLSKLLP (167 aa)) are excised as a propeptide. N-linked (GlcNAc...) asparagine glycosylation is found at Asn36, Asn122, Asn149, Asn156, Asn177, and Asn294. Over 177 to 687 (NLSKLLPQYL…EKGYNAHWNN (511 aa)) the chain is Extracellular. The 198-residue stretch at 184 to 381 (QYLEIYIIVE…FEAKCLQKLS (198 aa)) folds into the Peptidase M12B domain. 4 disulfides stabilise this stretch: Cys293-Cys376, Cys335-Cys360, Cys337-Cys342, and Cys450-Cys471. 4 N-linked (GlcNAc...) asparagine glycosylation sites follow: Asn359, Asn465, Asn611, and Asn625. One can recognise a Disintegrin domain in the interval 390-479 (QPVCGNGILE…DCVPDTYALN (90 aa)). The 35-residue stretch at 620 to 654 (TGYNCNTTTKCKGKGICNNFGNCQCFPGHKPPDCK) folds into the EGF-like domain. Intrachain disulfides connect Cys624/Cys636, Cys630/Cys642, and Cys644/Cys653. Residues 688-708 (WFILSFYIVLPFFIIFTIVIF) traverse the membrane as a helical segment. Topologically, residues 709–746 (KRNEIRKLCNRENTELIHPLYQKAMMWNINIAQNFRSK) are cytoplasmic.

The prodomain and the metalloprotease-like domain are cleaved during the epididymal maturation of the spermatozoa. As to expression, expressed predominantly in adult and prepubertal testis.

It is found in the membrane. Its function is as follows. Sperm surface membrane protein that may be involved in spermatogenesis and fertilization. This is a non catalytic metalloprotease-like protein. The protein is Disintegrin and metalloproteinase domain-containing protein 18 (ADAM18) of Macaca fascicularis (Crab-eating macaque).